Reading from the N-terminus, the 410-residue chain is MQIYLVGGAVRDTLLGLPVTERDYVVVGSEAQTLLDLGYQPVGRDFPVFLHPQTKEEYALARIERKQGKGYTGFACYAAPDVTLEQDLLRRDLTINAIAQDQDGQLYDPYGGISDLNNRVLRHISPAFSEDPLRVLRVARFAARFHHLGFYIAPETLALMRKLSRSGELNHLTPERIWKEIEKVLSGRNPQIFFEILHDCEALNVLLPEVDALFGIPARPDWHPEVDTGIHVMMALREASQRSEQLAVRFATLCHDLGKAQTPAHILPSHHGHGERGTPLIRELCKRLKVPNDCRDLAILVSELHSLVHTALQLRPATMLKLFDRLDVWRKPERLSQLLLCCQADFYGRQGFAEREYPEPEYVQQAYDAAVAVAVKPIVEAGYTGEAIRLQLSRRRIFAIRDVHCRWNDK.

ATP contacts are provided by Gly8 and Arg11. CTP contacts are provided by Gly8 and Arg11. Mg(2+) is bound by residues Glu21 and Asp23. ATP contacts are provided by Arg91, Arg137, and Arg140. Arg91, Arg137, and Arg140 together coordinate CTP. An HD domain is found at 228 to 329 (TGIHVMMALR…LKLFDRLDVW (102 aa)).

This sequence belongs to the tRNA nucleotidyltransferase/poly(A) polymerase family. Bacterial CCA-adding enzyme type 1 subfamily. As to quaternary structure, monomer. Can also form homodimers and oligomers. Mg(2+) is required as a cofactor. The cofactor is Ni(2+).

It catalyses the reaction a tRNA precursor + 2 CTP + ATP = a tRNA with a 3' CCA end + 3 diphosphate. The enzyme catalyses a tRNA with a 3' CCA end + 2 CTP + ATP = a tRNA with a 3' CCACCA end + 3 diphosphate. Functionally, catalyzes the addition and repair of the essential 3'-terminal CCA sequence in tRNAs without using a nucleic acid template. Adds these three nucleotides in the order of C, C, and A to the tRNA nucleotide-73, using CTP and ATP as substrates and producing inorganic pyrophosphate. tRNA 3'-terminal CCA addition is required both for tRNA processing and repair. Also involved in tRNA surveillance by mediating tandem CCA addition to generate a CCACCA at the 3' terminus of unstable tRNAs. While stable tRNAs receive only 3'-terminal CCA, unstable tRNAs are marked with CCACCA and rapidly degraded. The protein is Multifunctional CCA protein of Tolumonas auensis (strain DSM 9187 / NBRC 110442 / TA 4).